The following is a 203-amino-acid chain: Ponticulin-like protein H (203 aa).

The first 20 residues, 1–20, serve as a signal peptide directing secretion; sequence MKLLNSLVLLAALCAITANG. N-linked (GlcNAc...) asparagine glycosylation is present at Asn58. Positions 127–168 are enriched in low complexity; sequence SDSTNPTSTPSTTPSATPTVTPSTTPTVTPTVTPSTTPTVAP. Positions 127-183 are disordered; the sequence is SDSTNPTSTPSTTPSATPTVTPSTTPTVTPTVTPSTTPTVAPTVPPTTPPSTTTGSG. Residue Ser182 is the site of GPI-like-anchor amidated serine attachment. Residues 183 to 203 constitute a propeptide, removed in mature form; that stretch reads GSTVVASFGLIVSILLASLAL.

Belongs to the ponticulin family. In terms of processing, the GPI-like-anchor contains a phosphoceramide group, rather than a phosphatidyl group.

It localises to the cell membrane. Binds F-actin and nucleates actin assembly. This chain is Ponticulin-like protein H (ponH), found in Dictyostelium discoideum (Social amoeba).